A 373-amino-acid polypeptide reads, in one-letter code: CASP-like protein UU6 (373 aa).

Disordered regions lie at residues 1–100 (MGTL…GSEG) and 172–195 (TKETETTPESSRASDEDAPTPKKK). At 1 to 204 (MGTLTDPTVD…KHRLRKHLTA (204 aa)) the chain is on the cytoplasmic side. Residues 56-74 (KTNTGNAAESTASTENGET) show a composition bias toward polar residues. Residues 205–225 (IGAYSFAFRFSETVLSLIAIV) form a helical membrane-spanning segment. Residues 226 to 253 (VMCSTRGSMRTDGVDFGTLKFNHFQAYR) are Extracellular-facing. Residues 254-274 (YLVAVNVIVFVYSTFQFIQLL) form a helical membrane-spanning segment. Residues 275 to 276 (YT) are Cytoplasmic-facing. The helical transmembrane segment at 277–297 (VILGISFIPSIFISTWMTFGF) threads the bilayer. The Extracellular segment spans residues 298–342 (DQLFLYLLLSASTSAATVANMSYTGEMGIQLCSRFDVGSFCSKAD). Asn317 carries N-linked (GlcNAc...) asparagine glycosylation. Residues 343–363 (VAVTMSFFAVLAMLSSTILAI) traverse the membrane as a helical segment. The Cytoplasmic portion of the chain corresponds to 364–373 (YRIAVLLREY).

Belongs to the Casparian strip membrane proteins (CASP) family. As to quaternary structure, homodimer and heterodimers.

It is found in the cell membrane. This chain is CASP-like protein UU6, found in Physcomitrium patens (Spreading-leaved earth moss).